The sequence spans 168 residues: MSSQQYQQQRRKFAAAFLALIFILAAVDTAEAGKKEKPEKKVKKSDCGEWQWSVCVPTSGDCGLGTREGTRTGAECKQTMKTQRCKIPCNWKKQFGAECKYQFQAWGECDLNTALKTRTGSLKRALHNADCQKTVTISKPCGKLTKPKPQAESKKKKKEGKKQEKMLD.

A signal peptide spans 1 to 32 (MSSQQYQQQRRKFAAAFLALIFILAAVDTAEA). 5 disulfide bridges follow: Cys47–Cys76, Cys55–Cys85, Cys62–Cys89, Cys99–Cys131, and Cys109–Cys141. Chondroitin sulfate binding stretches follow at residues 92–99 (KKQFGAEC) and 123–131 (KRALHNADC). The interval 139–168 (KPCGKLTKPKPQAESKKKKKEGKKQEKMLD) is disordered. Positions 147-168 (PKPQAESKKKKKEGKKQEKMLD) are chondroitin sulfate A binding.

The protein belongs to the pleiotrophin family. In terms of assembly, interacts with ALK and NEK6. Interacts with PTPRZ1 (via chondroitin sulfate groups); promotes formation of homooligomers; oligomerization impairs tyrosine phosphatase activity. Forms a complex with PTPRZ1 and CTNNB1; this complex inactivates PTPRZ1 protein tyrosine phosphatase activity through PTN interaction and stimulates tyrosine phosphorylation of CTNNB1. Interacts with ITGB3 and ITGA5. Forms a complex with PTPRZ1 and integrin alpha-V/beta-3 (ITGAV:ITGB3) that stimulates endothelial cell migration through ITGB3 'Tyr-773' phosphorylation. Interacts with SDC3 (via heparan sulfate chains); this interaction mediates the neurite outgrowth-promoting signal from PTN to the cytoskeleton of growing neurites; this interaction mediates osteoblast recruitment. Interacts with GPC2 (via heparan sulfate); this interaction promotes neurite outgrowth through binding of PTN with chondroitin sulfate of proteoglycans, thereby releasing PTPRS of chondroitin sulfate proteoglycans (CSPGs) and leading to binding with heparan sulfate of GPC2. Phosphorylated by NEK6. As to expression, osteoblast and brain. Expressed in the follicular epithelium and granulosa cells of the ovary. Strongly expressed in the uterus of newborn mice, and the degree of expression decreased in one-week-old mice, although the expression continues even in the uteri of adult mice. Expression gradually increases from proestrus to estrus, then decreases sharply, and thereafter gradually increased again. strongly expressed in the cochlea of WT mice 1 week after birth, and then the expression decreased and was undetectable by week 8 after birth. Expressed around the cell soma of osteocytes and apparently captured in the unmineralized interstitial matrix surrounding the cells. Furthermore distributed throughout the intraosseous canalicular porosity, being localized in the unmineralized matrix around the cell processes. Strongly expressed in the innermost layer of the periosteum.

Its subcellular location is the secreted. Secreted growth factor that mediates its signal through cell-surface proteoglycan and non-proteoglycan receptors. Binds cell-surface proteoglycan receptor via their chondroitin sulfate (CS) groups. Thereby regulates many processes like cell proliferation, cell survival, cell growth, cell differentiation and cell migration in several tissues namely neuron and bone. Also plays a role in synaptic plasticity and learning-related behavior by inhibiting long-term synaptic potentiation. Binds PTPRZ1, leading to neutralization of the negative charges of the CS chains of PTPRZ1, inducing PTPRZ1 clustering, thereby causing the dimerization and inactivation of its phosphatase activity leading to increased tyrosine phosphorylation of each of the PTPRZ1 substrates like ALK or AFAP1L2 in order to activate the PI3K-AKT pathway. Through PTPRZ1 binding controls oligodendrocyte precursor cell differentiation by enhancing the phosphorylation of AFAP1L2 in order to activate the PI3K-AKT pathway. Forms a complex with PTPRZ1 and integrin alpha-V/beta-3 (ITGAV:ITGB3) that stimulates endothelial cell migration through SRC dephosphorylation and activation that consequently leads to ITGB3 'Tyr-773' phosphorylation. In adult hippocampus promotes dendritic arborization, spine development, and functional integration and connectivity of newborn granule neurons through ALK by activating AKT signaling pathway. Binds GPC2 and chondroitin sulfate proteoglycans (CSPGs) at the neuron surface, leading to abrogation of binding between PTPRS and CSPGs and neurite outgrowth promotion. Binds SDC3 and mediates bone formation by recruiting and attaching osteoblasts/osteoblast precursors to the sites for new bone deposition. Binds ALK and promotes cell survival and cell proliferation through MAPK pathway activation. Inhibits proliferation and enhances differentiation of neural stem cells by inhibiting FGF2-induced fibroblast growth factor receptor signaling pathway. Mediates regulatory mechanisms in normal hemostasis and in hematopoietic regeneration and in maintaining the balance of myeloid and lymphoid regeneration. In addition may play a role in the female reproductive system, auditory response and the progesterone-induced decidualization pathway. The protein is Pleiotrophin of Mus musculus (Mouse).